Consider the following 470-residue polypeptide: Cell division protein FtsP (470 aa).

Residues 1–27 (MSLSRRQFIQASGIALCAGAVPLKASA) constitute a signal peptide (tat-type signal). The Plastocyanin-like domain occupies 229 to 287 (VRLRLLNASNSRRYQLQMSDGRPLHVISGDQGFLPAPVSVKQLSLAPGERREILVDMSN).

This sequence belongs to the FtsP family. Predicted to be exported by the Tat system. The position of the signal peptide cleavage has not been experimentally proven.

The protein localises to the periplasm. Cell division protein that is required for growth during stress conditions. May be involved in protecting or stabilizing the divisomal assembly under conditions of stress. The sequence is that of Cell division protein FtsP from Shigella dysenteriae serotype 1 (strain Sd197).